The following is a 132-amino-acid chain: Small ribosomal subunit protein uS9 (132 aa).

Belongs to the universal ribosomal protein uS9 family.

This chain is Small ribosomal subunit protein uS9, found in Mesomycoplasma hyopneumoniae (strain 232) (Mycoplasma hyopneumoniae).